Here is a 186-residue protein sequence, read N- to C-terminus: Holliday junction branch migration complex subunit RuvA (186 aa).

Residues 1–61 (MYRYIKGIVT…EDIFQLYGFK (61 aa)) form a domain I region. Positions 62-134 (DEETLNLFLK…LKGKLVNDEL (73 aa)) are domain II. Positions 134 to 137 (LDMQ) are flexible linker. The domain III stretch occupies residues 138 to 186 (LLSDNSKDVAAALEALGYNKKEIAKSLKHVNFDQDLNKALKEALAILLK).

It belongs to the RuvA family. In terms of assembly, homotetramer. Forms an RuvA(8)-RuvB(12)-Holliday junction (HJ) complex. HJ DNA is sandwiched between 2 RuvA tetramers; dsDNA enters through RuvA and exits via RuvB. An RuvB hexamer assembles on each DNA strand where it exits the tetramer. Each RuvB hexamer is contacted by two RuvA subunits (via domain III) on 2 adjacent RuvB subunits; this complex drives branch migration. In the full resolvosome a probable DNA-RuvA(4)-RuvB(12)-RuvC(2) complex forms which resolves the HJ.

It localises to the cytoplasm. Functionally, the RuvA-RuvB-RuvC complex processes Holliday junction (HJ) DNA during genetic recombination and DNA repair, while the RuvA-RuvB complex plays an important role in the rescue of blocked DNA replication forks via replication fork reversal (RFR). RuvA specifically binds to HJ cruciform DNA, conferring on it an open structure. The RuvB hexamer acts as an ATP-dependent pump, pulling dsDNA into and through the RuvAB complex. HJ branch migration allows RuvC to scan DNA until it finds its consensus sequence, where it cleaves and resolves the cruciform DNA. This chain is Holliday junction branch migration complex subunit RuvA, found in Acholeplasma laidlawii (strain PG-8A).